Here is a 366-residue protein sequence, read N- to C-terminus: Flagellar P-ring protein (366 aa).

The first 24 residues, 1–24, serve as a signal peptide directing secretion; that stretch reads MWPLLLAVALSTLLPLAMPGSAGA.

This sequence belongs to the FlgI family. In terms of assembly, the basal body constitutes a major portion of the flagellar organelle and consists of four rings (L,P,S, and M) mounted on a central rod.

It is found in the periplasm. The protein resides in the bacterial flagellum basal body. In terms of biological role, assembles around the rod to form the L-ring and probably protects the motor/basal body from shearing forces during rotation. The sequence is that of Flagellar P-ring protein from Nitratidesulfovibrio vulgaris (strain ATCC 29579 / DSM 644 / CCUG 34227 / NCIMB 8303 / VKM B-1760 / Hildenborough) (Desulfovibrio vulgaris).